A 289-amino-acid polypeptide reads, in one-letter code: 2-hydroxy-6-oxononadienedioate/2-hydroxy-6-oxononatrienedioate hydrolase (289 aa).

His-269 acts as the Proton acceptor in catalysis.

Belongs to the AB hydrolase superfamily. MhpC family. As to quaternary structure, homodimer.

It catalyses the reaction (2Z,4E)-2-hydroxy-6-oxonona-2,4-dienedioate + H2O = (2Z)-2-hydroxypenta-2,4-dienoate + succinate + H(+). The catalysed reaction is (2Z,4E,7E)-2-hydroxy-6-oxonona-2,4,7-trienedioate + H2O = (2Z)-2-hydroxypenta-2,4-dienoate + fumarate + H(+). It participates in aromatic compound metabolism; 3-phenylpropanoate degradation. In terms of biological role, catalyzes the cleavage of the C5-C6 bond of 2-hydroxy-6-oxononadienedioate and 2-hydroxy-6-oxononatrienedioate, a dienol ring fission product of the bacterial meta-cleavage pathway for degradation of phenylpropionic acid. This chain is 2-hydroxy-6-oxononadienedioate/2-hydroxy-6-oxononatrienedioate hydrolase, found in Cupriavidus pinatubonensis (strain JMP 134 / LMG 1197) (Cupriavidus necator (strain JMP 134)).